Consider the following 712-residue polypeptide: Ribosomal RNA large subunit methyltransferase K/L (712 aa).

The THUMP domain occupies 46-157; it reads GAYQALLHSR…RENMVVSLDL (112 aa).

Belongs to the methyltransferase superfamily. RlmKL family.

Its subcellular location is the cytoplasm. It catalyses the reaction guanosine(2445) in 23S rRNA + S-adenosyl-L-methionine = N(2)-methylguanosine(2445) in 23S rRNA + S-adenosyl-L-homocysteine + H(+). The catalysed reaction is guanosine(2069) in 23S rRNA + S-adenosyl-L-methionine = N(2)-methylguanosine(2069) in 23S rRNA + S-adenosyl-L-homocysteine + H(+). Its function is as follows. Specifically methylates the guanine in position 2445 (m2G2445) and the guanine in position 2069 (m7G2069) of 23S rRNA. In Actinobacillus pleuropneumoniae serotype 5b (strain L20), this protein is Ribosomal RNA large subunit methyltransferase K/L.